A 257-amino-acid chain; its full sequence is tRNA (cytidine/uridine/adenosine-2'-O-)-methyltransferase TrmJ (257 aa).

S-adenosyl-L-methionine is bound by residues 79–82 (TSAR), 115–117 (GRE), Ile-135, and 142–144 (GSL).

It belongs to the class IV-like SAM-binding methyltransferase superfamily. RNA methyltransferase TrmH family. As to quaternary structure, homodimer.

The protein resides in the cytoplasm. It carries out the reaction cytidine(32) in tRNA + S-adenosyl-L-methionine = 2'-O-methylcytidine(32) in tRNA + S-adenosyl-L-homocysteine + H(+). The catalysed reaction is uridine(32) in tRNA + S-adenosyl-L-methionine = 2'-O-methyluridine(32) in tRNA + S-adenosyl-L-homocysteine + H(+). It catalyses the reaction adenosine(32) in tRNA + S-adenosyl-L-methionine = 2'-O-methyladenosine(32) in tRNA + S-adenosyl-L-homocysteine + H(+). Functionally, catalyzes the formation of 2'O-methylated cytidine (Cm32), 2'O-methylated uridine (Um32) or 2'O-methylated adenosine (Am32) at position 32 in tRNA. Confers resistance to oxidative stress. The polypeptide is tRNA (cytidine/uridine/adenosine-2'-O-)-methyltransferase TrmJ (Pseudomonas aeruginosa (strain UCBPP-PA14)).